Consider the following 377-residue polypeptide: Chaperone protein DnaJ (377 aa).

A J domain is found at 5 to 69 (EYYDRLGLSK…QKRAAYDQYG (65 aa)). The segment at 133–215 (GAEKEIHYNR…CHGTGREKQS (83 aa)) adopts a CR-type zinc-finger fold. Zn(2+) is bound by residues C146, C149, C163, C166, C189, C192, C203, and C206. 4 CXXCXGXG motif repeats span residues 146-153 (CKTCSGSG), 163-170 (CGRCHGHG), 189-196 (CDVCHGTG), and 203-210 (CQTCHGTG).

Belongs to the DnaJ family. As to quaternary structure, homodimer. Zn(2+) serves as cofactor.

The protein localises to the cytoplasm. Its function is as follows. Participates actively in the response to hyperosmotic and heat shock by preventing the aggregation of stress-denatured proteins and by disaggregating proteins, also in an autonomous, DnaK-independent fashion. Unfolded proteins bind initially to DnaJ; upon interaction with the DnaJ-bound protein, DnaK hydrolyzes its bound ATP, resulting in the formation of a stable complex. GrpE releases ADP from DnaK; ATP binding to DnaK triggers the release of the substrate protein, thus completing the reaction cycle. Several rounds of ATP-dependent interactions between DnaJ, DnaK and GrpE are required for fully efficient folding. Also involved, together with DnaK and GrpE, in the DNA replication of plasmids through activation of initiation proteins. The polypeptide is Chaperone protein DnaJ (Streptococcus thermophilus (strain CNRZ 1066)).